Here is a 391-residue protein sequence, read N- to C-terminus: Ferrochelatase (391 aa).

His-196 and Glu-281 together coordinate Fe cation.

Belongs to the ferrochelatase family.

The protein resides in the cytoplasm. It carries out the reaction heme b + 2 H(+) = protoporphyrin IX + Fe(2+). Its pathway is porphyrin-containing compound metabolism; protoheme biosynthesis; protoheme from protoporphyrin-IX: step 1/1. Functionally, catalyzes the ferrous insertion into protoporphyrin IX. The chain is Ferrochelatase from Parasynechococcus marenigrum (strain WH8102).